We begin with the raw amino-acid sequence, 432 residues long: Glutamyl-tRNA reductase (432 aa).

Residues 49–52, Ser109, 114–116, and Gln120 each bind substrate; these read TCNR and EGQ. The active-site Nucleophile is Cys50. 198-203 contributes to the NADP(+) binding site; the sequence is GAGRMS.

This sequence belongs to the glutamyl-tRNA reductase family. Homodimer.

It catalyses the reaction (S)-4-amino-5-oxopentanoate + tRNA(Glu) + NADP(+) = L-glutamyl-tRNA(Glu) + NADPH + H(+). It functions in the pathway porphyrin-containing compound metabolism; protoporphyrin-IX biosynthesis; 5-aminolevulinate from L-glutamyl-tRNA(Glu): step 1/2. Its pathway is porphyrin-containing compound metabolism; chlorophyll biosynthesis. Catalyzes the NADPH-dependent reduction of glutamyl-tRNA(Glu) to glutamate 1-semialdehyde (GSA). This is Glutamyl-tRNA reductase from Synechococcus sp. (strain CC9902).